The primary structure comprises 518 residues: Protein translocase subunit SecD (518 aa).

The next 6 membrane-spanning stretches (helical) occupy residues 9–29 (IFLS…NFMQ), 361–381 (LIGF…LGLF), 384–404 (IALS…QATL), 406–426 (LPGI…NVLI), 452–474 (FATI…IFGV), and 486–506 (IGII…IDIW).

It belongs to the SecD/SecF family. SecD subfamily. In terms of assembly, forms a complex with SecF. Part of the essential Sec protein translocation apparatus which comprises SecA, SecYEG and auxiliary proteins SecDF-YajC and YidC.

It is found in the cell inner membrane. In terms of biological role, part of the Sec protein translocase complex. Interacts with the SecYEG preprotein conducting channel. SecDF uses the proton motive force (PMF) to complete protein translocation after the ATP-dependent function of SecA. This chain is Protein translocase subunit SecD, found in Rickettsia conorii (strain ATCC VR-613 / Malish 7).